A 111-amino-acid polypeptide reads, in one-letter code: Exocrine gland-secreted peptide 22 (111 aa).

The signal sequence occupies residues 1-24; it reads MNSVPVMLFSISILLAAMLTEGRG.

Belongs to the exocrine gland-secreted peptide family. In terms of tissue distribution, expressed in acinar cells of the lacrimal gland from where it is secreted into tears. Not detected in a range of other tissues tested including other exocrine glands, internal organs and sensory epithelia.

The protein resides in the secreted. Its function is as follows. Pheromone produced by juveniles which activates a small number of vomeronasal organ sensory neurons and exhibits a powerful inhibitory effect on adult male mating behavior. In Mus musculus (Mouse), this protein is Exocrine gland-secreted peptide 22.